Consider the following 591-residue polypeptide: Aspartate--tRNA(Asp/Asn) ligase (591 aa).

Glu174 serves as a coordination point for L-aspartate. The aspartate stretch occupies residues 198 to 201 (QLFK). Position 220 (Arg220) interacts with L-aspartate. ATP contacts are provided by residues 220–222 (RDE) and Gln229. His450 contributes to the L-aspartate binding site. Glu483 contacts ATP. An L-aspartate-binding site is contributed by Arg490. ATP is bound at residue 535 to 538 (GLDR).

This sequence belongs to the class-II aminoacyl-tRNA synthetase family. Type 1 subfamily. Homodimer.

The protein resides in the cytoplasm. It carries out the reaction tRNA(Asx) + L-aspartate + ATP = L-aspartyl-tRNA(Asx) + AMP + diphosphate. Its function is as follows. Aspartyl-tRNA synthetase with relaxed tRNA specificity since it is able to aspartylate not only its cognate tRNA(Asp) but also tRNA(Asn). Reaction proceeds in two steps: L-aspartate is first activated by ATP to form Asp-AMP and then transferred to the acceptor end of tRNA(Asp/Asn). The sequence is that of Aspartate--tRNA(Asp/Asn) ligase from Pseudomonas putida (strain ATCC 700007 / DSM 6899 / JCM 31910 / BCRC 17059 / LMG 24140 / F1).